The primary structure comprises 214 residues: Transcriptional regulatory protein MctR (214 aa).

Positions 8-124 (RVLLIDNHPL…EIVSAIETVA (117 aa)) constitute a Response regulatory domain. At Asp59 the chain carries 4-aspartylphosphate. Residues 143–208 (VEEGSDPLTP…GLIRYALDHG (66 aa)) enclose the HTH luxR-type domain. Residues 167–186 (NKEIAETLGITSATAETHRK) constitute a DNA-binding region (H-T-H motif).

It localises to the cytoplasm. Its function is as follows. Member of the two-component regulatory system MctS/MctR, which activates mctP expression. The polypeptide is Transcriptional regulatory protein MctR (Rhizobium johnstonii (strain DSM 114642 / LMG 32736 / 3841) (Rhizobium leguminosarum bv. viciae)).